Consider the following 301-residue polypeptide: Ribosomal RNA small subunit methyltransferase H (301 aa).

S-adenosyl-L-methionine-binding positions include 35–37 (GGH), Asp-55, Phe-84, Asp-105, and Gln-112.

Belongs to the methyltransferase superfamily. RsmH family.

The protein resides in the cytoplasm. It catalyses the reaction cytidine(1402) in 16S rRNA + S-adenosyl-L-methionine = N(4)-methylcytidine(1402) in 16S rRNA + S-adenosyl-L-homocysteine + H(+). Its function is as follows. Specifically methylates the N4 position of cytidine in position 1402 (C1402) of 16S rRNA. The polypeptide is Ribosomal RNA small subunit methyltransferase H (Chloroflexus aggregans (strain MD-66 / DSM 9485)).